Consider the following 422-residue polypeptide: Zinc finger and BTB domain-containing protein 42 (422 aa).

Residues 24–92 enclose the BTB domain; that stretch reads CDCTVLVGDA…MYEGRLDLRS (69 aa). 3 disordered regions span residues 121-141, 166-188, and 207-256; these read KDRSLDPGNPAPGAEPAQPPC, AALPPRASGPPPCQVPEESDQAL, and LQTP…AAKG. Positions 243–252 are enriched in pro residues; it reads HSPPKPPPVP. 4 C2H2-type zinc fingers span residues 294 to 316, 334 to 356, 362 to 384, and 390 to 413; these read CICPLCSKLFPSSHVLQLHLSAH, PTCPLCGKTFSCTYTLKRHERTH, YTCVQCGKSFQYSHNLSRHTVVH, and HACRWCERRFTQSGDLYRHVRKFH.

This sequence belongs to the krueppel C2H2-type zinc-finger protein family. ZBTB18 subfamily. As to expression, expressed in skeletal muscle (at protein level).

Its subcellular location is the cytoplasm. The protein localises to the nucleus. The protein resides in the nucleoplasm. In terms of biological role, transcriptional repressor. Specifically binds DNA and probably acts by recruiting chromatin remodeling multiprotein complexes. The chain is Zinc finger and BTB domain-containing protein 42 (ZBTB42) from Homo sapiens (Human).